Here is a 208-residue protein sequence, read N- to C-terminus: Protein-L-isoaspartate O-methyltransferase (208 aa).

The active site involves serine 59.

It belongs to the methyltransferase superfamily. L-isoaspartyl/D-aspartyl protein methyltransferase family.

It localises to the cytoplasm. It catalyses the reaction [protein]-L-isoaspartate + S-adenosyl-L-methionine = [protein]-L-isoaspartate alpha-methyl ester + S-adenosyl-L-homocysteine. Its function is as follows. Catalyzes the methyl esterification of L-isoaspartyl residues in peptides and proteins that result from spontaneous decomposition of normal L-aspartyl and L-asparaginyl residues. It plays a role in the repair and/or degradation of damaged proteins. This is Protein-L-isoaspartate O-methyltransferase from Klebsiella pneumoniae (strain 342).